We begin with the raw amino-acid sequence, 814 residues long: Kexin (814 aa).

An N-terminal signal peptide occupies residues Met1–Ala19. A propeptide spanning residues Leu20–Arg109 is cleaved from the precursor. Asn42 is a glycosylation site (N-linked (GlcNAc...) asparagine). The propeptide at Leu110–Pro113 is removed by dipeptidylpeptidase STE13. Topologically, residues Ala114–His678 are lumenal. Asp135 is a Ca(2+) binding site. Residues Gln141–Ile453 enclose the Peptidase S8 domain. The N-linked (GlcNAc...) asparagine glycan is linked to Asn163. The active-site Charge relay system is Asp175. Asp184 contacts Ca(2+). His213 functions as the Charge relay system in the catalytic mechanism. Ca(2+) contacts are provided by Asn227, Asp277, Asp320, and Glu350. Disulfide bonds link Cys230–Cys377 and Cys322–Cys352. Ser385 (charge relay system) is an active-site residue. Asn404 and Asn480 each carry an N-linked (GlcNAc...) asparagine glycan. Residues Val462 to Asp596 form the P/Homo B domain. Residues Pro651 to Ser671 are disordered. Over residues Thr653–Pro667 the composition is skewed to low complexity. The helical transmembrane segment at Tyr679–Met699 threads the bilayer. The Cytoplasmic portion of the chain corresponds to Lys700–Ser814. The interval Ser756–Ser814 is disordered. A compositionally biased stretch (polar residues) spans Asn792–Gln801.

It belongs to the peptidase S8 family. Furin subfamily. The cofactor is Ca(2+). Post-translationally, O-glycosylated.

Its subcellular location is the golgi apparatus. It localises to the trans-Golgi network membrane. It carries out the reaction Cleavage of -Lys-Arg-|-Xaa- and -Arg-Arg-|-Xaa- bonds to process yeast alpha-factor pheromone and killer toxin precursors.. Functionally, processing of precursors of alpha-factors and killer toxin. The polypeptide is Kexin (KEX2) (Saccharomyces cerevisiae (strain ATCC 204508 / S288c) (Baker's yeast)).